We begin with the raw amino-acid sequence, 492 residues long: Tyrosinase-like protein 1 (492 aa).

The first 22 residues, methionine 1–cysteine 22, serve as a signal peptide directing secretion. Residues histidine 147, histidine 155, histidine 164, histidine 289, histidine 293, and histidine 316 each coordinate Cu cation. Residues serine 472–isoleucine 492 are disordered. Residues serine 482–isoleucine 492 are compositionally biased toward polar residues.

The cofactor is Cu(2+). In terms of tissue distribution, prismatic layer of shell (at protein level). Expressed primarily in the mantle with highest level in the mantle edge and lower level in the mantle pallium.

The protein localises to the secreted. This is Tyrosinase-like protein 1 from Margaritifera margaritifera (Freshwater pearl mussel).